A 375-amino-acid chain; its full sequence is Glucokinase 1 (375 aa).

25–30 (CDVGGS) serves as a coordination point for ATP.

It belongs to the bacterial glucokinase family. In terms of assembly, monomer. The N-terminus is blocked.

The enzyme catalyses D-glucose + ATP = D-glucose 6-phosphate + ADP + H(+). This chain is Glucokinase 1 (GK1), found in Trichomonas vaginalis.